The primary structure comprises 149 residues: Urease accessory protein UreE (149 aa).

It belongs to the UreE family.

Its subcellular location is the cytoplasm. In terms of biological role, involved in urease metallocenter assembly. Binds nickel. Probably functions as a nickel donor during metallocenter assembly. The sequence is that of Urease accessory protein UreE from Ureaplasma parvum serovar 3 (strain ATCC 700970).